A 213-amino-acid polypeptide reads, in one-letter code: Thiamine-phosphate synthase (213 aa).

4-amino-2-methyl-5-(diphosphooxymethyl)pyrimidine-binding positions include 40–44 (QFREK) and asparagine 75. Aspartate 76 and aspartate 95 together coordinate Mg(2+). Serine 113 is a binding site for 4-amino-2-methyl-5-(diphosphooxymethyl)pyrimidine. 139 to 141 (TPS) serves as a coordination point for 2-[(2R,5Z)-2-carboxy-4-methylthiazol-5(2H)-ylidene]ethyl phosphate. Lysine 142 contacts 4-amino-2-methyl-5-(diphosphooxymethyl)pyrimidine. Residues glycine 171 and 191 to 192 (IS) each bind 2-[(2R,5Z)-2-carboxy-4-methylthiazol-5(2H)-ylidene]ethyl phosphate.

Belongs to the thiamine-phosphate synthase family. The cofactor is Mg(2+).

It catalyses the reaction 2-[(2R,5Z)-2-carboxy-4-methylthiazol-5(2H)-ylidene]ethyl phosphate + 4-amino-2-methyl-5-(diphosphooxymethyl)pyrimidine + 2 H(+) = thiamine phosphate + CO2 + diphosphate. It carries out the reaction 2-(2-carboxy-4-methylthiazol-5-yl)ethyl phosphate + 4-amino-2-methyl-5-(diphosphooxymethyl)pyrimidine + 2 H(+) = thiamine phosphate + CO2 + diphosphate. The enzyme catalyses 4-methyl-5-(2-phosphooxyethyl)-thiazole + 4-amino-2-methyl-5-(diphosphooxymethyl)pyrimidine + H(+) = thiamine phosphate + diphosphate. It functions in the pathway cofactor biosynthesis; thiamine diphosphate biosynthesis; thiamine phosphate from 4-amino-2-methyl-5-diphosphomethylpyrimidine and 4-methyl-5-(2-phosphoethyl)-thiazole: step 1/1. Condenses 4-methyl-5-(beta-hydroxyethyl)thiazole monophosphate (THZ-P) and 2-methyl-4-amino-5-hydroxymethyl pyrimidine pyrophosphate (HMP-PP) to form thiamine monophosphate (TMP). This Staphylococcus aureus (strain MSSA476) protein is Thiamine-phosphate synthase.